A 310-amino-acid chain; its full sequence is N-acetyl-gamma-glutamyl-phosphate reductase (310 aa).

Cys-117 is an active-site residue.

It belongs to the NAGSA dehydrogenase family. Type 2 subfamily.

Its subcellular location is the cytoplasm. It carries out the reaction N-acetyl-L-glutamate 5-semialdehyde + phosphate + NADP(+) = N-acetyl-L-glutamyl 5-phosphate + NADPH + H(+). Its pathway is amino-acid biosynthesis; L-arginine biosynthesis; N(2)-acetyl-L-ornithine from L-glutamate: step 3/4. Functionally, catalyzes the NADPH-dependent reduction of N-acetyl-5-glutamyl phosphate to yield N-acetyl-L-glutamate 5-semialdehyde. The protein is N-acetyl-gamma-glutamyl-phosphate reductase of Brucella suis (strain ATCC 23445 / NCTC 10510).